The primary structure comprises 232 residues: Methylthioribulose-1-phosphate dehydratase (232 aa).

Position 91 (Cys91) interacts with substrate. Residues His109, His111, and His191 each contribute to the Zn(2+) site.

The protein belongs to the aldolase class II family. MtnB subfamily. It depends on Zn(2+) as a cofactor.

The protein resides in the cytoplasm. The enzyme catalyses 5-(methylsulfanyl)-D-ribulose 1-phosphate = 5-methylsulfanyl-2,3-dioxopentyl phosphate + H2O. It functions in the pathway amino-acid biosynthesis; L-methionine biosynthesis via salvage pathway; L-methionine from S-methyl-5-thio-alpha-D-ribose 1-phosphate: step 2/6. Its function is as follows. Catalyzes the dehydration of methylthioribulose-1-phosphate (MTRu-1-P) into 2,3-diketo-5-methylthiopentyl-1-phosphate (DK-MTP-1-P). The protein is Methylthioribulose-1-phosphate dehydratase of Schizosaccharomyces japonicus (strain yFS275 / FY16936) (Fission yeast).